A 436-amino-acid polypeptide reads, in one-letter code: Probable ABC transporter binding protein NosD (436 aa).

The signal sequence occupies residues 1–27 (MFKAQATFSRYSAAVSLLLLFSGAAQA). 8 PbH1 repeats span residues 85-113 (APDVLVEGCTLYEWGSDLTAMDSAVFILP), 115-136 (AERAQISNNRMRGPGFGVFVDG), 137-166 (TRDVQVIGNEIDGDAGVRSQDRGNGIHLFA), 167-188 (VSGARVLHNHVRNARDGIYIDT), 189-210 (SNGNHLEGNVIEDVRYGVHYMF), 233-255 (SRKLTVTGNRSEQDQNYGILMNY), 293-314 (SLFNTIENNHFEKSSLGIHLTA), and 316-354 (SEDNRISGNAFVGNQQQVKYVASRTQEWSVDGRGNYWSD).

This sequence belongs to the NosD family. As to quaternary structure, the complex may be composed of an ATP-binding protein (NosF), a transmembrane protein (NosY) and a solute-binding protein (NosD).

It localises to the periplasm. In terms of biological role, required for the assembly of the copper chromophores of nitrous oxide reductase. Could be part of the ABC transporter complex NosDFY. This is Probable ABC transporter binding protein NosD from Stutzerimonas stutzeri (Pseudomonas stutzeri).